We begin with the raw amino-acid sequence, 1002 residues long: DNA-directed RNA polymerase 1B, mitochondrial (1002 aa).

The N-terminal 21 residues, 1 to 21 (MWRYISKHAYSRKFRNSHDSA), are a transit peptide targeting the mitochondrion. Active-site residues include Asp-703, Lys-778, and Asp-935.

Belongs to the phage and mitochondrial RNA polymerase family.

Its subcellular location is the mitochondrion. The enzyme catalyses RNA(n) + a ribonucleoside 5'-triphosphate = RNA(n+1) + diphosphate. In terms of biological role, DNA-dependent RNA polymerase catalyzes the transcription of DNA into RNA using the four ribonucleoside triphosphates as substrates. In Nicotiana tabacum (Common tobacco), this protein is DNA-directed RNA polymerase 1B, mitochondrial (RPOT1-TOM).